The sequence spans 470 residues: Glutamate--tRNA ligase 2 (470 aa).

The short motif at 11 to 21 (PSPTGHLHLGG) is the 'HIGH' region element. A 'KMSKS' region motif is present at residues 238-242 (KLSKR). Lys241 provides a ligand contact to ATP.

It belongs to the class-I aminoacyl-tRNA synthetase family. Glutamate--tRNA ligase type 1 subfamily. In terms of assembly, monomer.

The protein resides in the cytoplasm. It catalyses the reaction tRNA(Glu) + L-glutamate + ATP = L-glutamyl-tRNA(Glu) + AMP + diphosphate. Functionally, catalyzes the attachment of glutamate to tRNA(Glu) in a two-step reaction: glutamate is first activated by ATP to form Glu-AMP and then transferred to the acceptor end of tRNA(Glu). This is Glutamate--tRNA ligase 2 from Ehrlichia ruminantium (strain Gardel).